The primary structure comprises 51 residues: Insulin-2 (51 aa).

Disulfide bonds link Cys8-Cys37, Cys20-Cys50, and Cys36-Cys41.

This sequence belongs to the insulin family. In terms of assembly, heterodimer of a B chain and an A chain linked by two disulfide bonds.

The protein localises to the secreted. Its function is as follows. Insulin decreases blood glucose concentration. It increases cell permeability to monosaccharides, amino acids and fatty acids. It accelerates glycolysis, the pentose phosphate cycle, and glycogen synthesis in liver. The chain is Insulin-2 from Katsuwonus pelamis (Skipjack tuna).